Here is a 184-residue protein sequence, read N- to C-terminus: ADP-ribosylation factor-like protein 2 (184 aa).

Residue G2 is the site of N-myristoyl glycine attachment. GTP is bound at residue 23-30; that stretch reads GLDNAGKT. S45 carries the post-translational modification Phosphoserine. GTP contacts are provided by residues 66 to 70 and G68; that span reads DVGGQ. A Glycyl lysine isopeptide (Lys-Gly) (interchain with G-Cter in ubiquitin) cross-link involves residue K71. 125 to 128 serves as a coordination point for GTP; the sequence is NKQD.

The protein belongs to the small GTPase superfamily. Arf family. In terms of assembly, interacts with ELMOD2. Interacts with ARL2BP; the GTP-bound form interacts with ARL2BP. The GDP-bound form interacts preferentially with TBCD. Interacts with UNC119. Found in a complex with ARL2, ARL2BP and SLC25A4. The GTP-bound form interacts with PDE6D. Found in a complex with ARL2, ARL2BP and SLC25A6. Found in a complex with at least ARL2, PPP2CB, PPP2R1A, PPP2R2A, PPP2R5E and TBCD. Post-translationally, not N-myristoylated. In terms of tissue distribution, expressed in liver and retina (at protein level).

It localises to the nucleus. It is found in the mitochondrion intermembrane space. The protein resides in the cytoplasm. Its subcellular location is the cytoskeleton. The protein localises to the microtubule organizing center. It localises to the centrosome. It is found in the mitochondrion. Small GTP-binding protein which cycles between an inactive GDP-bound and an active GTP-bound form, and the rate of cycling is regulated by guanine nucleotide exchange factors (GEF) and GTPase-activating proteins (GAP). GTP-binding protein that does not act as an allosteric activator of the cholera toxin catalytic subunit. Regulates formation of new microtubules and centrosome integrity. Prevents the TBCD-induced microtubule destruction. Participates in association with TBCD, in the disassembly of the apical junction complexes. Antagonizes the effect of TBCD on epithelial cell detachment and tight and adherens junctions disassembly. Together with ARL2, plays a role in the nuclear translocation, retention and transcriptional activity of STAT3. Component of a regulated secretory pathway involved in Ca(2+)-dependent release of acetylcholine. Required for normal progress through the cell cycle. The sequence is that of ADP-ribosylation factor-like protein 2 (ARL2) from Bos taurus (Bovine).